A 936-amino-acid polypeptide reads, in one-letter code: MLLAPQGRSFSKKRMGLNRWKRFTRKPSPKPTFGPDSVEHWIKRVEKASEFAVSNAFFTRNSDLPRSPWGQITDLKTSEQIEDHDEIYAEAQELVNDWLDTKLKQELASEEEGDAKNTVSSVTIMPEANGHLKYDKFDDLCGYLEEEEESTTVQKFIDHLLHKNVVDSAMMEDLGRKENQDKKQQKDPRLTMEMRHKQVKENRLRREKELEYQRIEKTLKKSAFLEAQCLVQEEKKRKALEAKKEEEEIQREMVKLRREIIERRRTVKAAWKIEKKRQEENSQNSSEKVMFQSTHILPDEEKMVKERKRKLKEVLIQTFKENQQCQKRYFAAWHKLILDHRIKLGKAGTLSDWKIQLKVLRAWRDYTRFQKLERETQALENDLREENRKQQLATEYNRKQVLRHCFTEWQHWHGAELLKRELALTKEETRKKMDALLQAASLGKLSANGLSGISLPEEATAMVGPPVKNGQETAVPPLWEKPPLGSSGCMLSPPLGRTTTGNLQGSLQNVSLSAPGNKQHKTLGAEPSQQPGSNETLRTTSQKAEPLCLGHFHNRHVFQQQLIEKQKKKLQEQQKTILELKKNLQLAEAQWAAEHALAVTEAQSHLLSKPREEEPRTCQMLVNSPVASPGTEGRSDSRNSLSGLRRKPKQLMTPHPILKAMEERAIQRAECRRILAEKKKKQEEEKLAQLKAQEEERQKREAEEKEAQLERKREEKRLKKMKELEKQKRIKRNQQLEAIAKEHYERVLLRKKGLEPWKRLRMQSKQNIQVAEEHYSLFLQRKYMLTWFQRSQESLARKMAQADQFYSQILLKRVIQSWLQYVIDLQEEVRKFCVHFLQKKIFRAWFNMVREVKIDSQGKHEIAAEHSDRRILWITLRTWKKFVKFMKEERVKEERRQQLRRKVVEILPDFQVPGRYHELYQQSDTWSLSKTSLVNE.

Coiled coils occupy residues Arg-189–Ala-270 and Arg-364–Ala-440. Positions Leu-495–Ser-541 are disordered. Polar residues-rich tracts occupy residues Arg-497–Gly-516 and Pro-527–Ser-541. A coiled-coil region spans residues Asn-554–Ala-592. Disordered regions lie at residues Leu-607–Pro-656 and Lys-691–Glu-714. Residues Glu-662–Ile-739 are a coiled coil.

This is Coiled-coil domain-containing protein 191 (CCDC191) from Homo sapiens (Human).